Here is a 171-residue protein sequence, read N- to C-terminus: NADH-quinone oxidoreductase subunit I 1 (171 aa).

2 4Fe-4S ferredoxin-type domains span residues 39–71 (IVLTRDPDGQERCVACNLCAVVCPVGCIDLTKA) and 81–110 (EHFRINFARCIFCGFCEEACPTSAIQLTPD). 8 residues coordinate [4Fe-4S] cluster: cysteine 51, cysteine 54, cysteine 57, cysteine 61, cysteine 90, cysteine 93, cysteine 96, and cysteine 100.

This sequence belongs to the complex I 23 kDa subunit family. As to quaternary structure, NDH-1 is composed of 14 different subunits. Subunits NuoA, H, J, K, L, M, N constitute the membrane sector of the complex. The cofactor is [4Fe-4S] cluster.

It is found in the cell inner membrane. The enzyme catalyses a quinone + NADH + 5 H(+)(in) = a quinol + NAD(+) + 4 H(+)(out). NDH-1 shuttles electrons from NADH, via FMN and iron-sulfur (Fe-S) centers, to quinones in the respiratory chain. The immediate electron acceptor for the enzyme in this species is believed to be ubiquinone. Couples the redox reaction to proton translocation (for every two electrons transferred, four hydrogen ions are translocated across the cytoplasmic membrane), and thus conserves the redox energy in a proton gradient. This Rhodopseudomonas palustris (strain BisB5) protein is NADH-quinone oxidoreductase subunit I 1.